A 273-amino-acid chain; its full sequence is Glutamate 5-kinase (273 aa).

Position 15 (lysine 15) interacts with ATP. Positions 55, 142, and 158 each coordinate substrate. ATP is bound by residues 178–179 and 220–226; these read SD and TGGMLSK.

Belongs to the glutamate 5-kinase family.

The protein localises to the cytoplasm. It carries out the reaction L-glutamate + ATP = L-glutamyl 5-phosphate + ADP. Its pathway is amino-acid biosynthesis; L-proline biosynthesis; L-glutamate 5-semialdehyde from L-glutamate: step 1/2. Catalyzes the transfer of a phosphate group to glutamate to form L-glutamate 5-phosphate. This Streptococcus pyogenes serotype M6 (strain ATCC BAA-946 / MGAS10394) protein is Glutamate 5-kinase.